The chain runs to 704 residues: Polyribonucleotide nucleotidyltransferase (704 aa).

Mg(2+) is bound by residues Asp486 and Asp492. One can recognise a KH domain in the interval 553 to 612; sequence PRIYTMKINPEKIKDVIGKGGSVIRALTDETGTTIEIEDDGTIKIAATDGDKAKHAIRRI. The S1 motif domain occupies 622–690; the sequence is GRIYAGKVTR…RQGRIRLSIK (69 aa).

This sequence belongs to the polyribonucleotide nucleotidyltransferase family. As to quaternary structure, component of the RNA degradosome, which is a multiprotein complex involved in RNA processing and mRNA degradation. Requires Mg(2+) as cofactor.

It localises to the cytoplasm. The catalysed reaction is RNA(n+1) + phosphate = RNA(n) + a ribonucleoside 5'-diphosphate. Involved in mRNA degradation. Catalyzes the phosphorolysis of single-stranded polyribonucleotides processively in the 3'- to 5'-direction. This Yersinia pseudotuberculosis serotype IB (strain PB1/+) protein is Polyribonucleotide nucleotidyltransferase.